Reading from the N-terminus, the 476-residue chain is ATP synthase subunit beta (476 aa).

Residue 154 to 161 participates in ATP binding; the sequence is GGAGVGKT.

Belongs to the ATPase alpha/beta chains family. F-type ATPases have 2 components, CF(1) - the catalytic core - and CF(0) - the membrane proton channel. CF(1) has five subunits: alpha(3), beta(3), gamma(1), delta(1), epsilon(1). CF(0) has three main subunits: a(1), b(2) and c(9-12). The alpha and beta chains form an alternating ring which encloses part of the gamma chain. CF(1) is attached to CF(0) by a central stalk formed by the gamma and epsilon chains, while a peripheral stalk is formed by the delta and b chains.

It localises to the cell inner membrane. It carries out the reaction ATP + H2O + 4 H(+)(in) = ADP + phosphate + 5 H(+)(out). In terms of biological role, produces ATP from ADP in the presence of a proton gradient across the membrane. The catalytic sites are hosted primarily by the beta subunits. The sequence is that of ATP synthase subunit beta from Nitrobacter winogradskyi (strain ATCC 25391 / DSM 10237 / CIP 104748 / NCIMB 11846 / Nb-255).